Consider the following 365-residue polypeptide: Putative glutamate--cysteine ligase 2-3 (365 aa).

It belongs to the glutamate--cysteine ligase type 2 family. YbdK subfamily.

The catalysed reaction is L-cysteine + L-glutamate + ATP = gamma-L-glutamyl-L-cysteine + ADP + phosphate + H(+). ATP-dependent carboxylate-amine ligase which exhibits weak glutamate--cysteine ligase activity. The protein is Putative glutamate--cysteine ligase 2-3 of Mycolicibacterium smegmatis (strain ATCC 700084 / mc(2)155) (Mycobacterium smegmatis).